Reading from the N-terminus, the 83-residue chain is Cytochrome b559 subunit alpha (83 aa).

Residues 21-35 (VIHSITIPSLFIAGW) traverse the membrane as a helical segment. Residue H23 participates in heme binding.

The protein belongs to the PsbE/PsbF family. As to quaternary structure, heterodimer of an alpha subunit and a beta subunit. PSII is composed of 1 copy each of membrane proteins PsbA, PsbB, PsbC, PsbD, PsbE, PsbF, PsbH, PsbI, PsbJ, PsbK, PsbL, PsbM, PsbT, PsbX, PsbY, PsbZ, Psb30/Ycf12, at least 3 peripheral proteins of the oxygen-evolving complex and a large number of cofactors. It forms dimeric complexes. Heme b is required as a cofactor.

The protein localises to the plastid. It localises to the chloroplast thylakoid membrane. Functionally, this b-type cytochrome is tightly associated with the reaction center of photosystem II (PSII). PSII is a light-driven water:plastoquinone oxidoreductase that uses light energy to abstract electrons from H(2)O, generating O(2) and a proton gradient subsequently used for ATP formation. It consists of a core antenna complex that captures photons, and an electron transfer chain that converts photonic excitation into a charge separation. The chain is Cytochrome b559 subunit alpha from Tupiella akineta (Green alga).